A 158-amino-acid chain; its full sequence is ATP synthase subunit beta, mitochondrial (158 aa).

Belongs to the ATPase alpha/beta chains family. As to quaternary structure, F-type ATPases have 2 components, CF(1) - the catalytic core - and CF(0) - the membrane proton channel. CF(1) has five subunits: alpha(3), beta(3), gamma(1), delta(1), epsilon(1). CF(0) has three main subunits: a, b and c.

The protein resides in the mitochondrion. Its subcellular location is the mitochondrion inner membrane. The enzyme catalyses ATP + H2O + 4 H(+)(in) = ADP + phosphate + 5 H(+)(out). Functionally, mitochondrial membrane ATP synthase (F(1)F(0) ATP synthase or Complex V) produces ATP from ADP in the presence of a proton gradient across the membrane which is generated by electron transport complexes of the respiratory chain. F-type ATPases consist of two structural domains, F(1) - containing the extramembraneous catalytic core, and F(0) - containing the membrane proton channel, linked together by a central stalk and a peripheral stalk. During catalysis, ATP synthesis in the catalytic domain of F(1) is coupled via a rotary mechanism of the central stalk subunits to proton translocation. Subunits alpha and beta form the catalytic core in F(1). Rotation of the central stalk against the surrounding alpha(3)beta(3) subunits leads to hydrolysis of ATP in three separate catalytic sites on the beta subunits. The polypeptide is ATP synthase subunit beta, mitochondrial (Schizaphis graminum (Green bug aphid)).